Reading from the N-terminus, the 89-residue chain is Mapacalcine (89 aa).

Glutamine 89 carries the glutamine amide modification.

As to quaternary structure, homodimer. Contains disulfide bonds which may also be involved in dimerization.

Its function is as follows. Blocks calcium currents via interaction with a yet unknown target protein. Has no effect on L-type, T-type, N-type or P/Q-type voltage-gated calcium channels (VGCC). Has no effect on voltage-gated potassium or chloride channels. Blocks non-L-type VGCC calcium currents in mouse duodenal myocytes (IC(50)=0.2 uM). Blocks calcium influx induced by hypoxia/reoxygenation in rat hepatocytes. The polypeptide is Mapacalcine (Pione vastifica (Boring sponge)).